Reading from the N-terminus, the 354-residue chain is Protein Wnt-11 (354 aa).

The N-terminal stretch at 1–24 (MRARPQVCEALLFALALHTGVCYG) is a signal peptide. Residues Asn40 and Asn90 are each glycosylated (N-linked (GlcNAc...) asparagine). 3 disulfides stabilise this stretch: Cys80/Cys91, Cys130/Cys138, and Cys140/Cys157. Residue Asn160 is glycosylated (N-linked (GlcNAc...) asparagine). 8 disulfide bridges follow: Cys209-Cys223, Cys211-Cys218, Cys283-Cys314, Cys299-Cys309, Cys313-Cys353, Cys329-Cys344, Cys331-Cys341, and Cys336-Cys337. The O-palmitoleoyl serine; by PORCN moiety is linked to residue Ser215. Asn300 and Asn304 each carry an N-linked (GlcNAc...) asparagine glycan.

The protein belongs to the Wnt family. Palmitoleoylation is required for efficient binding to frizzled receptors. Depalmitoleoylation leads to Wnt signaling pathway inhibition.

It is found in the secreted. The protein localises to the extracellular space. The protein resides in the extracellular matrix. Functionally, ligand for members of the frizzled family of seven transmembrane receptors. Probable developmental protein. May be a signaling molecule which affects the development of discrete regions of tissues. Is likely to signal over only few cell diameters. The sequence is that of Protein Wnt-11 (Wnt11) from Mus musculus (Mouse).